A 269-amino-acid polypeptide reads, in one-letter code: Tryptophan synthase alpha chain (269 aa).

Active-site proton acceptor residues include glutamate 49 and aspartate 60.

This sequence belongs to the TrpA family. Tetramer of two alpha and two beta chains.

The enzyme catalyses (1S,2R)-1-C-(indol-3-yl)glycerol 3-phosphate + L-serine = D-glyceraldehyde 3-phosphate + L-tryptophan + H2O. It participates in amino-acid biosynthesis; L-tryptophan biosynthesis; L-tryptophan from chorismate: step 5/5. The alpha subunit is responsible for the aldol cleavage of indoleglycerol phosphate to indole and glyceraldehyde 3-phosphate. This Pseudomonas putida (strain ATCC 47054 / DSM 6125 / CFBP 8728 / NCIMB 11950 / KT2440) protein is Tryptophan synthase alpha chain.